The following is a 587-amino-acid chain: Pectinesterase 2 (587 aa).

The N-terminal stretch at 1–40 (MAPIKEFISKFSDFKNNKKLILSSAAIALLLLASIVGIAA) is a signal peptide. N-linked (GlcNAc...) asparagine glycans are attached at residues asparagine 99 and asparagine 218. 2 residues coordinate substrate: threonine 351 and glutamine 381. Aspartate 404 functions as the Proton donor in the catalytic mechanism. A disulfide bond links cysteine 418 and cysteine 438. Aspartate 425 serves as the catalytic Nucleophile. 2 residues coordinate substrate: arginine 493 and tryptophan 495.

In the N-terminal section; belongs to the PMEI family. The protein in the C-terminal section; belongs to the pectinesterase family. Expressed in flower buds.

It is found in the secreted. The protein localises to the cell wall. The catalysed reaction is [(1-&gt;4)-alpha-D-galacturonosyl methyl ester](n) + n H2O = [(1-&gt;4)-alpha-D-galacturonosyl](n) + n methanol + n H(+). It participates in glycan metabolism; pectin degradation; 2-dehydro-3-deoxy-D-gluconate from pectin: step 1/5. Its function is as follows. Acts in the modification of cell walls via demethylesterification of cell wall pectin. This chain is Pectinesterase 2 (PME2), found in Arabidopsis thaliana (Mouse-ear cress).